A 438-amino-acid chain; its full sequence is Transmembrane protease serine 11F (438 aa).

The Cytoplasmic portion of the chain corresponds to 1 to 32 (MMYAPVEFSEAEFSRAEYQRKQQFWDSVRLAL). The chain crosses the membrane as a helical; Signal-anchor for type II membrane protein span at residues 33-53 (FTLAIVAIIGIAIGIVTHFVV). The Extracellular portion of the chain corresponds to 54–438 (EDDKSFYYLA…RDWIASKTGM (385 aa)). The SEA domain maps to 57–175 (KSFYYLASFK…PSFRLTPIDS (119 aa)). One can recognise a Peptidase S1 domain in the interval 206–437 (IVQGRETAME…YRDWIASKTG (232 aa)). An intrachain disulfide couples Cys233 to Cys249. Residues His248 and Asp293 each act as charge relay system in the active site. Intrachain disulfides connect Cys358–Cys374 and Cys385–Cys413. Ser389 (charge relay system) is an active-site residue.

Belongs to the peptidase S1 family.

It is found in the membrane. Probable serine protease. In Homo sapiens (Human), this protein is Transmembrane protease serine 11F (TMPRSS11F).